The following is a 385-amino-acid chain: MKKILAICGIELSLIFKKPQNYLIMFAAPLLLTFVFGSMLSGNDDKVRLAIVDQDDTILSQHYIRQLKAHDDMYVFENMSESKASEKLKQKKIAGIIVISRSFQTQLEKGKHPELIFRHGPELSEAPMVKQYAESALATLNIQVTAAKTASQTAGENWKAAYKTVFAKKHEDIVPAVTRQTLSDKKEGAEASDTASRAAGFSILFVMLTMMGAAGTILEARKNGVWSRLLTASVSRAEIGAGYVLSFFVIGWIQFGILLLSTHWLFGINWGNPAAVIVLVSLFLLTVVGIGLMIAANVRTPEQQLAFGNLFVIATCMVSGMYWPIDIEPKFMQSIAEFLPQKWAMSGLTEIIANGARVTDILGICGILLAFAAITFAAGLKALRA.

Helical transmembrane passes span 22–42 (YLIM…MLSG), 198–218 (AAGF…GTIL), 239–259 (IGAG…GILL), 274–294 (AAVI…GLMI), 305–325 (LAFG…YWPI), and 360–380 (DILG…AAGL). Positions 163–382 (KTVFAKKHED…AITFAAGLKA (220 aa)) constitute an ABC transmembrane type-2 domain.

It belongs to the ABC-2 integral membrane protein family. In terms of assembly, the complex is composed of two ATP-binding proteins (LnrL) and two transmembrane proteins (LnrM and LnrN).

It localises to the cell membrane. Its function is as follows. Required for resistance to linearmycins, a family of antibiotic-specialized metabolites produced by some streptomycetes. Part of the ABC transporter complex LnrLMN that probably facilitates linearmycin removal from the membrane. Responsible for the translocation of the substrate across the membrane. Also mediates KinC-dependent biofilm morphology. The chain is Linearmycin resistance permease protein LnrN from Bacillus subtilis (strain 168).